The sequence spans 439 residues: MVLKVVYYKKREKNQTLDDITNNESINNTNEYDLSDDSDLSYIIESYDDQNEEETEETNDDAVKLLKDIRKSFTNTEELKEDEFKDNNIVFSFQNYLFGVNKEHNIFNLQNRITLDDKILDYPTEPYSNTNSNFFNTRSINNNSSTFNNDDSNNSIIRESRNFSNQMNISEISSDKQIDSNINTLIEMQRDSTKFSAEITKTISKLNNTLNTINQNQVVLHKTIESHFIKITESLNYLIQPQQQQQQQQQQQQQQQQQQQQQQQQQQQQQQQQQPQHNNNNTQVQPPPPSQQLPPPPKPQPQLPKPQPQKPQPQLPKPPQQPKPPQEPQPDLTSLLKPKIKKQPPKEQQQEQQQQPPQEQQQQQPQEQQQQQQQQQQQQQQQQQQQQQQQQQPQEQQQQQQEPQHKTTTTTTQNNYHNNNNNNTTTPTTRTRFTTTNLH.

Residues 268-284 (QQQQQQQPQHNNNNTQV) are compositionally biased toward low complexity. Positions 268 to 439 (QQQQQQQPQH…RTRFTTTNLH (172 aa)) are disordered. Pro residues predominate over residues 285-328 (QPPPPSQQLPPPPKPQPQLPKPQPQKPQPQLPKPPQQPKPPQEP). A compositionally biased stretch (low complexity) spans 350–439 (QEQQQQPPQE…RTRFTTTNLH (90 aa)).

This is an uncharacterized protein from Dictyostelium discoideum (Social amoeba).